The primary structure comprises 152 residues: Deoxyuridine 5'-triphosphate nucleotidohydrolase (152 aa).

Residues 65 to 67, Asn78, and 82 to 84 each bind substrate; these read RSG and TID.

It belongs to the dUTPase family. Requires Mg(2+) as cofactor.

It catalyses the reaction dUTP + H2O = dUMP + diphosphate + H(+). It functions in the pathway pyrimidine metabolism; dUMP biosynthesis; dUMP from dCTP (dUTP route): step 2/2. Functionally, this enzyme is involved in nucleotide metabolism: it produces dUMP, the immediate precursor of thymidine nucleotides and it decreases the intracellular concentration of dUTP so that uracil cannot be incorporated into DNA. The chain is Deoxyuridine 5'-triphosphate nucleotidohydrolase from Chlorobaculum tepidum (strain ATCC 49652 / DSM 12025 / NBRC 103806 / TLS) (Chlorobium tepidum).